A 64-amino-acid chain; its full sequence is Large ribosomal subunit protein bL35 (64 aa).

It belongs to the bacterial ribosomal protein bL35 family.

The sequence is that of Large ribosomal subunit protein bL35 from Wolinella succinogenes (strain ATCC 29543 / DSM 1740 / CCUG 13145 / JCM 31913 / LMG 7466 / NCTC 11488 / FDC 602W) (Vibrio succinogenes).